The chain runs to 715 residues: Elongation factor G (715 aa).

Residues 12–309 (RRVRNIGIMA…GVIDYLPSPL (298 aa)) form the tr-type G domain. GTP-binding positions include 21-28 (AHIDAGKT), 108-112 (DTPGH), and 162-165 (NKMD).

This sequence belongs to the TRAFAC class translation factor GTPase superfamily. Classic translation factor GTPase family. EF-G/EF-2 subfamily.

The protein localises to the cytoplasm. Its function is as follows. Catalyzes the GTP-dependent ribosomal translocation step during translation elongation. During this step, the ribosome changes from the pre-translocational (PRE) to the post-translocational (POST) state as the newly formed A-site-bound peptidyl-tRNA and P-site-bound deacylated tRNA move to the P and E sites, respectively. Catalyzes the coordinated movement of the two tRNA molecules, the mRNA and conformational changes in the ribosome. The polypeptide is Elongation factor G (Rubrobacter xylanophilus (strain DSM 9941 / JCM 11954 / NBRC 16129 / PRD-1)).